The following is a 511-amino-acid chain: Zinc finger CCCH-type with G patch domain-containing protein (511 aa).

Met-1 bears the N-acetylmethionine mark. A Phosphoserine modification is found at Ser-70. The interval 92 to 129 (PGAPCNDSETAPGSEVQPGSTSSALEEEEEDPDLEELS) is disordered. The segment covering 98 to 115 (DSETAPGSEVQPGSTSSA) has biased composition (polar residues). The span at 116 to 127 (LEEEEEDPDLEE) shows a compositional bias: acidic residues. A C3H1-type zinc finger spans residues 174 to 200 (KSLKPCPFFLEGKCRFKENCRFSHGQV). The segment at 266–291 (PPLRTEATESSDSDTGDASDSSYARV) is disordered. Ser-276 is modified (phosphoserine). Residue Thr-280 is modified to Phosphothreonine. Residues 313 to 359 (TRGIGSKLLVKMGYEFGKGLGRHAEGRVEPIHAVVLPRGKSLDQCAE) form the G-patch domain. Position 353 is a phosphoserine (Ser-353). Disordered stretches follow at residues 363–393 (KKTK…PPRN) and 490–511 (AQEA…MTEF). Basic and acidic residues predominate over residues 491-511 (QEADLQRKQRKADTHRKMTEF).

Interacts with CHD4/Mi-2; the interaction is direct.

Its subcellular location is the nucleus. Transcription repressor that specifically binds the 5'-GGAG[GA]A[GA]A-3' consensus sequence. Represses transcription by recruiting the chromatin multiprotein complex NuRD to target promoters. Negatively regulates expression of EGFR, a gene involved in cell proliferation, survival and migration. Its ability to repress genes of the EGFR pathway suggest it may act as a tumor suppressor. This chain is Zinc finger CCCH-type with G patch domain-containing protein (Zgpat), found in Mus musculus (Mouse).